Here is a 301-residue protein sequence, read N- to C-terminus: Ribonuclease Z (301 aa).

Residues His60, His62, Asp64, His65, His137, Asp207, and His265 each contribute to the Zn(2+) site. Asp64 serves as the catalytic Proton acceptor.

The protein belongs to the RNase Z family. In terms of assembly, homodimer. Zn(2+) is required as a cofactor.

The catalysed reaction is Endonucleolytic cleavage of RNA, removing extra 3' nucleotides from tRNA precursor, generating 3' termini of tRNAs. A 3'-hydroxy group is left at the tRNA terminus and a 5'-phosphoryl group is left at the trailer molecule.. Functionally, zinc phosphodiesterase, which displays some tRNA 3'-processing endonuclease activity. Probably involved in tRNA maturation, by removing a 3'-trailer from precursor tRNA. In Exiguobacterium sibiricum (strain DSM 17290 / CCUG 55495 / CIP 109462 / JCM 13490 / 255-15), this protein is Ribonuclease Z.